The sequence spans 203 residues: Large ribosomal subunit protein eL15 (203 aa).

The disordered stretch occupies residues 160-186 (ESRGLTSTGKRSRGLNKGHRYNKTRAG). A compositionally biased stretch (basic residues) spans 169–186 (KRSRGLNKGHRYNKTRAG).

It belongs to the eukaryotic ribosomal protein eL15 family. Component of the large ribosomal subunit (LSU). Mature N.crassa ribosomes consist of a small (40S) and a large (60S) subunit. The 40S small subunit contains 1 molecule of ribosomal RNA (18S rRNA) and at least 32 different proteins. The large 60S subunit contains 3 rRNA molecules (26S, 5.8S and 5S rRNA) and at least 42 different proteins.

The protein localises to the cytoplasm. In terms of biological role, component of the ribosome, a large ribonucleoprotein complex responsible for the synthesis of proteins in the cell. The small ribosomal subunit (SSU) binds messenger RNAs (mRNAs) and translates the encoded message by selecting cognate aminoacyl-transfer RNA (tRNA) molecules. The large subunit (LSU) contains the ribosomal catalytic site termed the peptidyl transferase center (PTC), which catalyzes the formation of peptide bonds, thereby polymerizing the amino acids delivered by tRNAs into a polypeptide chain. The nascent polypeptides leave the ribosome through a tunnel in the LSU and interact with protein factors that function in enzymatic processing, targeting, and the membrane insertion of nascent chains at the exit of the ribosomal tunnel. This is Large ribosomal subunit protein eL15 (rpl-15) from Neurospora crassa (strain ATCC 24698 / 74-OR23-1A / CBS 708.71 / DSM 1257 / FGSC 987).